The chain runs to 112 residues: Gonad-inhibiting hormone (112 aa).

Residues 1 to 31 form the signal peptide; the sequence is MVTRVGSGFSVQRVWLLLVIVVVLCGSVTQQ. Disulfide bonds link Cys-41–Cys-78, Cys-58–Cys-74, and Cys-61–Cys-87. Ala-109 bears the Alanine amide mark.

Produced in the eyestalk X-organ sinus gland complex of male and female lobsters.

It localises to the secreted. Inhibits vitellogenesis in female animals. Plays a prominent role in the regulation of reproduction/molting processes. The sequence is that of Gonad-inhibiting hormone from Homarus americanus (American lobster).